The primary structure comprises 485 residues: Hydrogenase transcriptional regulatory protein HoxA (485 aa).

The region spanning 6-120 (TILVVDDEVR…QLVETVKEAV (115 aa)) is the Response regulatory domain. The residue at position 54 (aspartate 54) is a 4-aspartylphosphate. Residues 166-392 (STESPMHAVI…ELQNEIQRMA (227 aa)) form the Sigma-54 factor interaction domain. Residues 192-199 (GESGTGKE) and 264-273 (EIGETSPAFQ) contribute to the ATP site. The segment at 404–426 (PLLGRRNGKRSAPLPAHGRLNGS) is disordered. Positions 451–470 (NISRVASELGLSRVGLRNKL) form a DNA-binding region, H-T-H motif.

The protein localises to the cytoplasm. Functionally, probable member of the two-component regulatory system involved in the regulation of the hydrogenase activity. HoxA is probably phosphorylated by a sensory component (which could be HoxX) and then acts in conjunction with sigma-54 as a transcriptional activator. The protein is Hydrogenase transcriptional regulatory protein HoxA (hoxA) of Bradyrhizobium diazoefficiens (strain JCM 10833 / BCRC 13528 / IAM 13628 / NBRC 14792 / USDA 110).